The chain runs to 345 residues: Telomere-binding protein cav (345 aa).

The tract at residues 115–337 (RRKMVQPYPE…TITFQNTESE (223 aa)) is required for binding to Su(var)205. Disordered stretches follow at residues 145-180 (RLDR…HEDQ) and 200-231 (PPGV…INRP). 2 short sequence motifs (su(var)205-binding Pro-containing repeat) span residues 231 to 237 (PETEINE) and 298 to 304 (PETEMNE).

As to quaternary structure, component of the HipHop-HOAP telomere capping complex, composed of at least HipHop and cav/HOAP, and may include Su(var)205/HP1; HipHop and cav/HOAP, but not Su(var)205, are interdependent for their protein stability. Interacts with HipHop (via N-terminus). Interacts (via C-terminus) with Su(var)205/HP1 dimer (via hinge and chromoshadow domain) and Orc1; possibly interacts with other components of the origin recognition complex (ORC). Each molecule of cav/HOAP interacts with 2 molecules of Su(var)205/HP1. The HipHop-HOAP complex recruits the MTV complex, consisting of moi/modigliani, tea and ver/verrocchio, to telomeres, forming the terminin telomere-capping complex. Interacts with moi/modigliani; the interaction is direct. Interacts with ver/verrochio; the interaction is direct. Interacts with HP6, which is also part of the terminin complex. Interacts (via N-terminus) with peo/pendolino (via N-terminus); the interaction is direct.

It is found in the nucleus. Its subcellular location is the chromosome. The protein resides in the telomere. Its function is as follows. Part of the HipHop-HOAP complex that recruits the MTV complex to form the terminin telomere-capping complex, which binds to chromosome ends in a sequence-independent manner and prevents telomere fusion. Telomere capping is independent of the origin recognition complex (ORC). The polypeptide is Telomere-binding protein cav (Drosophila melanogaster (Fruit fly)).